Here is a 309-residue protein sequence, read N- to C-terminus: Biotin synthase (309 aa).

Residues 35 to 259 enclose the Radical SAM core domain; that stretch reads NKIQISSLLS…MIPKSYIRLS (225 aa). 3 residues coordinate [4Fe-4S] cluster: C50, C54, and C57. [2Fe-2S] cluster-binding residues include C94, C125, C185, and R257.

Belongs to the radical SAM superfamily. Biotin synthase family. In terms of assembly, homodimer. [4Fe-4S] cluster is required as a cofactor. The cofactor is [2Fe-2S] cluster.

It carries out the reaction (4R,5S)-dethiobiotin + (sulfur carrier)-SH + 2 reduced [2Fe-2S]-[ferredoxin] + 2 S-adenosyl-L-methionine = (sulfur carrier)-H + biotin + 2 5'-deoxyadenosine + 2 L-methionine + 2 oxidized [2Fe-2S]-[ferredoxin]. Its pathway is cofactor biosynthesis; biotin biosynthesis; biotin from 7,8-diaminononanoate: step 2/2. In terms of biological role, catalyzes the conversion of dethiobiotin (DTB) to biotin by the insertion of a sulfur atom into dethiobiotin via a radical-based mechanism. The chain is Biotin synthase from Rickettsia felis (strain ATCC VR-1525 / URRWXCal2) (Rickettsia azadi).